Reading from the N-terminus, the 446-residue chain is Tubulin beta-2 chain (446 aa).

GTP is bound by residues glutamine 11, glutamate 69, serine 138, glycine 142, threonine 143, glycine 144, asparagine 204, and asparagine 226. Glutamate 69 is a Mg(2+) binding site. A disordered region spans residues 426 to 446 (QEAGIDEEEEYEEEAPAEHEE). The segment covering 429 to 440 (GIDEEEEYEEEA) has biased composition (acidic residues).

Belongs to the tubulin family. In terms of assembly, dimer of alpha and beta chains. A typical microtubule is a hollow water-filled tube with an outer diameter of 25 nm and an inner diameter of 15 nM. Alpha-beta heterodimers associate head-to-tail to form protofilaments running lengthwise along the microtubule wall with the beta-tubulin subunit facing the microtubule plus end conferring a structural polarity. Microtubules usually have 13 protofilaments but different protofilament numbers can be found in some organisms and specialized cells. Requires Mg(2+) as cofactor.

Its subcellular location is the cytoplasm. It is found in the cytoskeleton. Functionally, tubulin is the major constituent of microtubules, a cylinder consisting of laterally associated linear protofilaments composed of alpha- and beta-tubulin heterodimers. Microtubules grow by the addition of GTP-tubulin dimers to the microtubule end, where a stabilizing cap forms. Below the cap, tubulin dimers are in GDP-bound state, owing to GTPase activity of alpha-tubulin. The sequence is that of Tubulin beta-2 chain from Hypocrea virens (Gliocladium virens).